Consider the following 231-residue polypeptide: uncharacterized protein (231 aa).

Residues 4-116 (RILVVEDDED…ELHARVIAQL (113 aa)) enclose the Response regulatory domain. D52 bears the 4-aspartylphosphate mark. The ompR/PhoB-type DNA-binding region spans 129–230 (EETFLIGGKL…EWGRGYRFGA (102 aa)).

In terms of processing, phosphorylated by YrkQ.

The protein resides in the cytoplasm. Its function is as follows. Member of the two-component regulatory system YrkQ/YrkP. This is an uncharacterized protein from Bacillus subtilis (strain 168).